Reading from the N-terminus, the 396-residue chain is Phosphoglycerate kinase (396 aa).

Substrate contacts are provided by residues 21-23, R36, 59-62, R118, and R151; these read DFN and HLGR. Residues K201, G292, E323, and 349-352 each bind ATP; that span reads GGDS.

Belongs to the phosphoglycerate kinase family. Monomer.

Its subcellular location is the cytoplasm. The enzyme catalyses (2R)-3-phosphoglycerate + ATP = (2R)-3-phospho-glyceroyl phosphate + ADP. The protein operates within carbohydrate degradation; glycolysis; pyruvate from D-glyceraldehyde 3-phosphate: step 2/5. This chain is Phosphoglycerate kinase, found in Leptospira interrogans serogroup Icterohaemorrhagiae serovar copenhageni (strain Fiocruz L1-130).